The following is a 257-amino-acid chain: Pantothenate synthetase (257 aa).

29-36 (MGNLHAGH) contributes to the ATP binding site. The active-site Proton donor is the His-36. Gln-60 is a (R)-pantoate binding site. Gln-60 lines the beta-alanine pocket. 145 to 148 (GEKD) provides a ligand contact to ATP. A (R)-pantoate-binding site is contributed by Gln-151. ATP-binding positions include Val-174 and 182 to 185 (LSSR).

It belongs to the pantothenate synthetase family. In terms of assembly, homodimer.

It localises to the cytoplasm. The catalysed reaction is (R)-pantoate + beta-alanine + ATP = (R)-pantothenate + AMP + diphosphate + H(+). The protein operates within cofactor biosynthesis; (R)-pantothenate biosynthesis; (R)-pantothenate from (R)-pantoate and beta-alanine: step 1/1. In terms of biological role, catalyzes the condensation of pantoate with beta-alanine in an ATP-dependent reaction via a pantoyl-adenylate intermediate. This is Pantothenate synthetase from Coxiella burnetii (strain Dugway 5J108-111).